The following is a 300-amino-acid chain: MDGILNINKPFGITSFDVVAKVRRIYSQKRVGHGGTLDPYATGVIPVFLGRSTRLIEYLSSVSKTYLAEIELGVETDSYDSEGEITFRKTCDYVTREMIYKTLMDFQGEIIQIPPMYSAVKHRGMRLYNLARQGIEVERIPRVATIYGIELLNYTSPVLRVRIECGHGTYIRSLAFDLGRKLGCGAYLKSLVREAYGQFNLANSLDFADLEAAKCDGKLAGILLPLETAIGHLPRVSLDEKNITRLVNGLEITLDRIDKPEAVAVYNAENSFVAIIQPETDGTWHPAKVFIRQSPKPDAN.

Asp38 (nucleophile) is an active-site residue.

The protein belongs to the pseudouridine synthase TruB family. Type 1 subfamily.

The enzyme catalyses uridine(55) in tRNA = pseudouridine(55) in tRNA. Responsible for synthesis of pseudouridine from uracil-55 in the psi GC loop of transfer RNAs. The polypeptide is tRNA pseudouridine synthase B (Dehalococcoides mccartyi (strain CBDB1)).